Here is a 387-residue protein sequence, read N- to C-terminus: 3-ketoacyl-CoA thiolase (387 aa).

Cys-91 acts as the Acyl-thioester intermediate in catalysis. Active-site proton acceptor residues include His-343 and Cys-373.

The protein belongs to the thiolase-like superfamily. Thiolase family. In terms of assembly, heterotetramer of two alpha chains (FadB) and two beta chains (FadA).

The protein localises to the cytoplasm. The enzyme catalyses an acyl-CoA + acetyl-CoA = a 3-oxoacyl-CoA + CoA. It functions in the pathway lipid metabolism; fatty acid beta-oxidation. Its function is as follows. Catalyzes the final step of fatty acid oxidation in which acetyl-CoA is released and the CoA ester of a fatty acid two carbons shorter is formed. This chain is 3-ketoacyl-CoA thiolase, found in Aeromonas salmonicida (strain A449).